Consider the following 738-residue polypeptide: Phosphoribosylformylglycinamidine synthase subunit PurL (738 aa).

His53 is an active-site residue. ATP is bound by residues Tyr56 and Lys95. Glu97 contributes to the Mg(2+) binding site. Residues 98–101 (SHNH) and Arg120 each bind substrate. The active-site Proton acceptor is His99. Mg(2+) is bound at residue Asp121. Residue Gln244 participates in substrate binding. Asp274 contacts Mg(2+). 318–320 (ESQ) provides a ligand contact to substrate. Positions 499 and 536 each coordinate ATP. Asn537 lines the Mg(2+) pocket. Ser539 is a substrate binding site.

Belongs to the FGAMS family. In terms of assembly, monomer. Part of the FGAM synthase complex composed of 1 PurL, 1 PurQ and 2 PurS subunits.

It is found in the cytoplasm. The enzyme catalyses N(2)-formyl-N(1)-(5-phospho-beta-D-ribosyl)glycinamide + L-glutamine + ATP + H2O = 2-formamido-N(1)-(5-O-phospho-beta-D-ribosyl)acetamidine + L-glutamate + ADP + phosphate + H(+). Its pathway is purine metabolism; IMP biosynthesis via de novo pathway; 5-amino-1-(5-phospho-D-ribosyl)imidazole from N(2)-formyl-N(1)-(5-phospho-D-ribosyl)glycinamide: step 1/2. Functionally, part of the phosphoribosylformylglycinamidine synthase complex involved in the purines biosynthetic pathway. Catalyzes the ATP-dependent conversion of formylglycinamide ribonucleotide (FGAR) and glutamine to yield formylglycinamidine ribonucleotide (FGAM) and glutamate. The FGAM synthase complex is composed of three subunits. PurQ produces an ammonia molecule by converting glutamine to glutamate. PurL transfers the ammonia molecule to FGAR to form FGAM in an ATP-dependent manner. PurS interacts with PurQ and PurL and is thought to assist in the transfer of the ammonia molecule from PurQ to PurL. The protein is Phosphoribosylformylglycinamidine synthase subunit PurL of Lacticaseibacillus paracasei (strain ATCC 334 / BCRC 17002 / CCUG 31169 / CIP 107868 / KCTC 3260 / NRRL B-441) (Lactobacillus paracasei).